Reading from the N-terminus, the 147-residue chain is Hemoglobin subunit delta (147 aa).

V2 is modified (N-acetylalanine; in variant Niigata). The Globin domain maps to 3–147; that stretch reads HLTPEEKTAV…VANALAHKYH (145 aa). S51 is subject to Phosphoserine. Residues H64 and H93 each coordinate heme b.

It belongs to the globin family. As to quaternary structure, heterotetramer of two alpha chains and two delta chains in adult hemoglobin A2 (HbA2). HbA2 represents less than 3.5% of adult hemoglobin. Red blood cells.

Its function is as follows. Involved in oxygen transport from the lung to the various peripheral tissues. In Homo sapiens (Human), this protein is Hemoglobin subunit delta (HBD).